Consider the following 411-residue polypeptide: Imidazolonepropionase (411 aa).

2 residues coordinate Fe(3+): His-78 and His-80. 2 residues coordinate Zn(2+): His-78 and His-80. Residues Arg-87, Tyr-150, and His-183 each contribute to the 4-imidazolone-5-propanoate site. Tyr-150 is a binding site for N-formimidoyl-L-glutamate. His-248 contacts Fe(3+). His-248 provides a ligand contact to Zn(2+). Gln-251 contacts 4-imidazolone-5-propanoate. Asp-322 is a binding site for Fe(3+). Residue Asp-322 coordinates Zn(2+). 2 residues coordinate N-formimidoyl-L-glutamate: Asn-324 and Gly-326. Residue Ser-327 participates in 4-imidazolone-5-propanoate binding.

This sequence belongs to the metallo-dependent hydrolases superfamily. HutI family. Requires Zn(2+) as cofactor. It depends on Fe(3+) as a cofactor.

It is found in the cytoplasm. It catalyses the reaction 4-imidazolone-5-propanoate + H2O = N-formimidoyl-L-glutamate. It participates in amino-acid degradation; L-histidine degradation into L-glutamate; N-formimidoyl-L-glutamate from L-histidine: step 3/3. Functionally, catalyzes the hydrolytic cleavage of the carbon-nitrogen bond in imidazolone-5-propanoate to yield N-formimidoyl-L-glutamate. It is the third step in the universal histidine degradation pathway. The protein is Imidazolonepropionase of Christiangramia forsetii (strain DSM 17595 / CGMCC 1.15422 / KT0803) (Gramella forsetii).